The sequence spans 421 residues: Glutamyl-tRNA reductase (421 aa).

Substrate contacts are provided by residues 49–52 (TCNR), Ser-109, 114–116 (EAQ), and Gln-120. Cys-50 acts as the Nucleophile in catalysis. NADP(+) is bound at residue 189-194 (GAGEMC).

This sequence belongs to the glutamyl-tRNA reductase family. In terms of assembly, homodimer.

The catalysed reaction is (S)-4-amino-5-oxopentanoate + tRNA(Glu) + NADP(+) = L-glutamyl-tRNA(Glu) + NADPH + H(+). It participates in porphyrin-containing compound metabolism; protoporphyrin-IX biosynthesis; 5-aminolevulinate from L-glutamyl-tRNA(Glu): step 1/2. In terms of biological role, catalyzes the NADPH-dependent reduction of glutamyl-tRNA(Glu) to glutamate 1-semialdehyde (GSA). This chain is Glutamyl-tRNA reductase, found in Magnetococcus marinus (strain ATCC BAA-1437 / JCM 17883 / MC-1).